Reading from the N-terminus, the 225-residue chain is Chlorosome protein J (225 aa).

Residues 1 to 95 (MIIYINDKPC…TIRVLTRAEK (95 aa)) form the 2Fe-2S ferredoxin-type domain. [2Fe-2S] cluster-binding residues include C33, C39, C42, and C77.

[2Fe-2S] cluster serves as cofactor.

The protein resides in the chlorosome. Could play a direct role in the oxidation or reduction of the quenching species formed in the chlorosome. The chain is Chlorosome protein J (csmJ) from Chlorobaculum tepidum (strain ATCC 49652 / DSM 12025 / NBRC 103806 / TLS) (Chlorobium tepidum).